A 336-amino-acid chain; its full sequence is MTTVSQNQVVVETEDKQDNLLRLPYFVSVEQLSADDVLHLLQRAQYFKNGGEVPALSRPIFCTNMFFENSTRTHTSFEVAERRLGLTVIPFDPSHSSVNKGENLYDTELTMASLGIELSVIRHPENAYYNEIIRPKEGQHLQMGLVNAGDGSGQHPSQSMLDMMTIYNEFGHFDGLKIMIVGDLTNSRVARSNMEILNTLGAEVYFSGPEYWYNAEEFSKYGTYVKNIDDEIPELDVLMLLRVQHERHNGAEAKTEQLFDAKDYNAAYGLNQRRYDMLKDDAIIMHPGPINRGVEWDGDLVEAPKSRYAVQMHNGVFVRMAMIEAVLRGRKLGGLE.

Positions 72 and 73 each coordinate carbamoyl phosphate. Lys100 contributes to the L-aspartate binding site. Carbamoyl phosphate is bound by residues Arg122, His155, and Gln158. Residues Arg188 and Arg242 each contribute to the L-aspartate site. Residues Gly288 and Pro289 each contribute to the carbamoyl phosphate site.

Belongs to the aspartate/ornithine carbamoyltransferase superfamily. ATCase family. As to quaternary structure, heterododecamer (2C3:3R2) of six catalytic PyrB chains organized as two trimers (C3), and six regulatory PyrI chains organized as three dimers (R2).

It carries out the reaction carbamoyl phosphate + L-aspartate = N-carbamoyl-L-aspartate + phosphate + H(+). Its pathway is pyrimidine metabolism; UMP biosynthesis via de novo pathway; (S)-dihydroorotate from bicarbonate: step 2/3. Catalyzes the condensation of carbamoyl phosphate and aspartate to form carbamoyl aspartate and inorganic phosphate, the committed step in the de novo pyrimidine nucleotide biosynthesis pathway. The protein is Aspartate carbamoyltransferase catalytic subunit of Lactobacillus leichmannii.